The following is a 278-amino-acid chain: 2-dehydro-3-deoxyphosphooctonate aldolase (278 aa).

Belongs to the KdsA family.

The protein resides in the cytoplasm. It carries out the reaction D-arabinose 5-phosphate + phosphoenolpyruvate + H2O = 3-deoxy-alpha-D-manno-2-octulosonate-8-phosphate + phosphate. It functions in the pathway carbohydrate biosynthesis; 3-deoxy-D-manno-octulosonate biosynthesis; 3-deoxy-D-manno-octulosonate from D-ribulose 5-phosphate: step 2/3. It participates in bacterial outer membrane biogenesis; lipopolysaccharide biosynthesis. The sequence is that of 2-dehydro-3-deoxyphosphooctonate aldolase from Fusobacterium nucleatum subsp. nucleatum (strain ATCC 25586 / DSM 15643 / BCRC 10681 / CIP 101130 / JCM 8532 / KCTC 2640 / LMG 13131 / VPI 4355).